We begin with the raw amino-acid sequence, 193 residues long: Ion-translocating oxidoreductase complex subunit A (193 aa).

Transmembrane regions (helical) follow at residues 5-25 (FLLFVGTVLVNNFVLVKFLGL), 39-59 (IGMGFATTFVMTLASVCSWLV), 62-82 (FILLPLDLIYLRTLSFILVIA), 102-122 (LLGIFLPLITTNCAVLGVALL), 134-154 (AIYGFGAAAGFSLVMVLFAAI), and 171-191 (SIGLITAGLMSLAFMGFSGLV).

Belongs to the NqrDE/RnfAE family. As to quaternary structure, the complex is composed of six subunits: RnfA, RnfB, RnfC, RnfD, RnfE and RnfG.

The protein localises to the cell inner membrane. In terms of biological role, part of a membrane-bound complex that couples electron transfer with translocation of ions across the membrane. This is Ion-translocating oxidoreductase complex subunit A from Photorhabdus laumondii subsp. laumondii (strain DSM 15139 / CIP 105565 / TT01) (Photorhabdus luminescens subsp. laumondii).